A 334-amino-acid chain; its full sequence is Adenosine deaminase (334 aa).

Positions 12 and 14 each coordinate Zn(2+). H14, D16, and G170 together coordinate substrate. Residue H197 coordinates Zn(2+). The Proton donor role is filled by E200. D278 contacts Zn(2+). Substrate is bound at residue D279.

It belongs to the metallo-dependent hydrolases superfamily. Adenosine and AMP deaminases family. Adenosine deaminase subfamily. Zn(2+) serves as cofactor.

It carries out the reaction adenosine + H2O + H(+) = inosine + NH4(+). It catalyses the reaction 2'-deoxyadenosine + H2O + H(+) = 2'-deoxyinosine + NH4(+). Catalyzes the hydrolytic deamination of adenosine and 2-deoxyadenosine. This chain is Adenosine deaminase, found in Vibrio parahaemolyticus serotype O3:K6 (strain RIMD 2210633).